A 152-amino-acid chain; its full sequence is Ribosome maturation factor RimP (152 aa).

It belongs to the RimP family.

The protein localises to the cytoplasm. Its function is as follows. Required for maturation of 30S ribosomal subunits. The chain is Ribosome maturation factor RimP from Paraburkholderia phymatum (strain DSM 17167 / CIP 108236 / LMG 21445 / STM815) (Burkholderia phymatum).